A 284-amino-acid polypeptide reads, in one-letter code: Shikimate dehydrogenase (NADP(+)) (284 aa).

Shikimate is bound by residues 20 to 22 and S67; that span reads SIS. K71 functions as the Proton acceptor in the catalytic mechanism. Residue D83 participates in NADP(+) binding. N92 and D107 together coordinate shikimate. Residues 129–133 and I227 contribute to the NADP(+) site; that span reads GAGGA. Y229 serves as a coordination point for shikimate. Position 250 (G250) interacts with NADP(+).

The protein belongs to the shikimate dehydrogenase family. As to quaternary structure, homodimer.

The enzyme catalyses shikimate + NADP(+) = 3-dehydroshikimate + NADPH + H(+). It functions in the pathway metabolic intermediate biosynthesis; chorismate biosynthesis; chorismate from D-erythrose 4-phosphate and phosphoenolpyruvate: step 4/7. In terms of biological role, involved in the biosynthesis of the chorismate, which leads to the biosynthesis of aromatic amino acids. Catalyzes the reversible NADPH linked reduction of 3-dehydroshikimate (DHSA) to yield shikimate (SA). The protein is Shikimate dehydrogenase (NADP(+)) of Streptococcus pneumoniae (strain JJA).